Here is a 655-residue protein sequence, read N- to C-terminus: p-hydroxybenzoic acid efflux pump subunit AaeB (655 aa).

A run of 11 helical transmembrane segments spans residues 13 to 33, 38 to 58, 69 to 89, 93 to 113, 121 to 141, 152 to 172, 370 to 390, 407 to 427, 431 to 451, 459 to 479, and 482 to 502; these read FAVKLACAIVLALFIGFHFQL, WAVLTAAIVAAGPAFAAGGEP, LRIIGTFIGCIAALIIIISMI, LLMILVCCVWAGFCTWISSLV, WGLSGYTALIIVITIQTEPLL, EIVIGIGCAILADLLFSPRSI, LFWLWTGWTSGNGAMVMIAVV, FIYGTLAALPLGLLYFLVIIP, QSMLLLCLSLAVLGFFIGIEV, MGALASTINIIVLDNPMTFHF, and FLDSALGQIVGCMLAFIVILL.

This sequence belongs to the aromatic acid exporter ArAE (TC 2.A.85) family.

It is found in the cell inner membrane. Its function is as follows. Forms an efflux pump with AaeA. Could function as a metabolic relief valve, allowing to eliminate certain compounds when they accumulate to high levels in the cell. This chain is p-hydroxybenzoic acid efflux pump subunit AaeB, found in Salmonella dublin (strain CT_02021853).